The following is a 428-amino-acid chain: L-glutamyl-[BtrI acyl-carrier protein] decarboxylase (428 aa).

Lysine 49 bears the N6-(pyridoxal phosphate)lysine mark. Residues glycine 228, 269–272 (ESGR), and tyrosine 375 each bind pyridoxal 5'-phosphate. Arginine 272 and tyrosine 375 together coordinate substrate.

The protein belongs to the Orn/Lys/Arg decarboxylase class-II family. In terms of assembly, homodimer. Pyridoxal 5'-phosphate is required as a cofactor.

The catalysed reaction is gamma-L-glutamyl-[BtrI ACP] + H(+) = 4-aminobutanoyl-[BtrI ACP] + CO2. It functions in the pathway antibiotic biosynthesis; butirosin biosynthesis. Its function is as follows. Pyridoxal phosphate-dependent decarboxylase that catalyzes 1 step in the biosynthesis of the side chain of the aminoglycoside antibiotics in the biosynthetic pathway of butirosin. Able to decarboxylate L-ornithine, L-arginine, L-lysine, but not L-glutamate or any D-amino acids. Has low activity with substrates not bound to an acyl-carrier protein. This is L-glutamyl-[BtrI acyl-carrier protein] decarboxylase (btrK) from Niallia circulans (Bacillus circulans).